The following is a 464-amino-acid chain: ATP synthase subunit beta (464 aa).

Residue 153-160 coordinates ATP; that stretch reads GGAGVGKT.

Belongs to the ATPase alpha/beta chains family. F-type ATPases have 2 components, CF(1) - the catalytic core - and CF(0) - the membrane proton channel. CF(1) has five subunits: alpha(3), beta(3), gamma(1), delta(1), epsilon(1). CF(0) has three main subunits: a(1), b(2) and c(9-12). The alpha and beta chains form an alternating ring which encloses part of the gamma chain. CF(1) is attached to CF(0) by a central stalk formed by the gamma and epsilon chains, while a peripheral stalk is formed by the delta and b chains.

It is found in the cell inner membrane. It catalyses the reaction ATP + H2O + 4 H(+)(in) = ADP + phosphate + 5 H(+)(out). In terms of biological role, produces ATP from ADP in the presence of a proton gradient across the membrane. The catalytic sites are hosted primarily by the beta subunits. The sequence is that of ATP synthase subunit beta from Burkholderia ambifaria (strain MC40-6).